The following is a 685-amino-acid chain: Methionine--tRNA ligase (685 aa).

Positions proline 12–histidine 22 match the 'HIGH' region motif. Zn(2+) is bound by residues cysteine 143, cysteine 146, cysteine 156, and cysteine 159. The short motif at lysine 339–serine 343 is the 'KMSKS' region element. Lysine 342 serves as a coordination point for ATP. In terms of domain architecture, tRNA-binding spans aspartate 582–glycine 685.

The protein belongs to the class-I aminoacyl-tRNA synthetase family. MetG type 1 subfamily. Homodimer. Zn(2+) serves as cofactor.

The protein localises to the cytoplasm. The catalysed reaction is tRNA(Met) + L-methionine + ATP = L-methionyl-tRNA(Met) + AMP + diphosphate. In terms of biological role, is required not only for elongation of protein synthesis but also for the initiation of all mRNA translation through initiator tRNA(fMet) aminoacylation. The chain is Methionine--tRNA ligase from Neisseria meningitidis serogroup C (strain 053442).